The primary structure comprises 495 residues: Glycerol kinase (495 aa).

Residue Thr-11 coordinates ADP. 3 residues coordinate ATP: Thr-11, Thr-12, and Ser-13. Thr-11 provides a ligand contact to sn-glycerol 3-phosphate. Sn-glycerol 3-phosphate is bound by residues Arg-81, Glu-82, Tyr-133, and Asp-242. Glycerol-binding residues include Arg-81, Glu-82, Tyr-133, Asp-242, and Gln-243. 4 residues coordinate ADP: Thr-264, Gly-307, Gly-407, and Asn-411. ATP is bound by residues Thr-264, Gly-307, and Gly-407.

It belongs to the FGGY kinase family.

The catalysed reaction is glycerol + ATP = sn-glycerol 3-phosphate + ADP + H(+). Its pathway is polyol metabolism; glycerol degradation via glycerol kinase pathway; sn-glycerol 3-phosphate from glycerol: step 1/1. Inhibited by fructose 1,6-bisphosphate (FBP). Functionally, key enzyme in the regulation of glycerol uptake and metabolism. Catalyzes the phosphorylation of glycerol to yield sn-glycerol 3-phosphate. This chain is Glycerol kinase, found in Thermus brockianus.